The chain runs to 401 residues: Splicing factor 45 (401 aa).

S2 carries the post-translational modification N-acetylserine. Residue S2 is modified to Phosphoserine. K15 participates in a covalent cross-link: Glycyl lysine isopeptide (Lys-Gly) (interchain with G-Cter in SUMO2). K21 carries the post-translational modification N6-acetyllysine. Glycyl lysine isopeptide (Lys-Gly) (interchain with G-Cter in SUMO2) cross-links involve residues K24 and K33. K41 is modified (N6-acetyllysine; alternate). A Glycyl lysine isopeptide (Lys-Gly) (interchain with G-Cter in SUMO2); alternate cross-link involves residue K41. Residues L57–I68 show a composition bias toward basic and acidic residues. Disordered stretches follow at residues L57–P84 and R114–N233. K58 participates in a covalent cross-link: Glycyl lysine isopeptide (Lys-Gly) (interchain with G-Cter in SUMO2). T71 carries the post-translational modification Phosphothreonine. Residues R114–P153 show a composition bias toward basic and acidic residues. 2 positions are modified to phosphoserine: S155 and S169. The segment covering V182 to P200 has biased composition (basic and acidic residues). S222 carries the phosphoserine modification. The G-patch domain maps to G235–T283. T237 is modified (phosphothreonine). K256 is covalently cross-linked (Glycyl lysine isopeptide (Lys-Gly) (interchain with G-Cter in SUMO2)). At S266 the chain carries Phosphoserine. Residue K276 forms a Glycyl lysine isopeptide (Lys-Gly) (interchain with G-Cter in SUMO2) linkage. S291 and S293 each carry phosphoserine. In terms of domain architecture, RRM spans V306–C385.

Binds SXL. Associates with the spliceosome. Interacts with SF3B1, SF1 and U2AF2.

The protein localises to the nucleus. Its function is as follows. Splice factor that binds to the single-stranded 3'AG at the exon/intron border and promotes its utilization in the second catalytic step. Involved in the regulation of alternative splicing and the utilization of cryptic splice sites. Promotes the utilization of a cryptic splice site created by the beta-110 mutation in the HBB gene. The resulting frameshift leads to sickle cell anemia. The protein is Splicing factor 45 (RBM17) of Homo sapiens (Human).